We begin with the raw amino-acid sequence, 76 residues long: RNA-binding protein KhpA (76 aa).

The region spanning 29-76 (QNIIELRVSPKDVGKVIGKNGRIAKSLRAILTAASVKAGKNFSLEIID) is the KH domain.

This sequence belongs to the KhpA RNA-binding protein family. As to quaternary structure, forms a complex with KhpB.

It localises to the cytoplasm. Its function is as follows. A probable RNA chaperone. Forms a complex with KhpB which binds to cellular RNA and controls its expression. Plays a role in peptidoglycan (PG) homeostasis and cell length regulation. This Leptospira interrogans serogroup Icterohaemorrhagiae serovar copenhageni (strain Fiocruz L1-130) protein is RNA-binding protein KhpA.